A 376-amino-acid chain; its full sequence is Succinyl-diaminopimelate desuccinylase (376 aa).

Zn(2+) is bound at residue H66. Residue D68 is part of the active site. D99 contacts Zn(2+). Residue E133 is the Proton acceptor of the active site. The Zn(2+) site is built by E134, E162, and H349.

This sequence belongs to the peptidase M20A family. DapE subfamily. Homodimer. Zn(2+) is required as a cofactor. The cofactor is Co(2+).

It carries out the reaction N-succinyl-(2S,6S)-2,6-diaminopimelate + H2O = (2S,6S)-2,6-diaminopimelate + succinate. Its pathway is amino-acid biosynthesis; L-lysine biosynthesis via DAP pathway; LL-2,6-diaminopimelate from (S)-tetrahydrodipicolinate (succinylase route): step 3/3. Functionally, catalyzes the hydrolysis of N-succinyl-L,L-diaminopimelic acid (SDAP), forming succinate and LL-2,6-diaminopimelate (DAP), an intermediate involved in the bacterial biosynthesis of lysine and meso-diaminopimelic acid, an essential component of bacterial cell walls. The chain is Succinyl-diaminopimelate desuccinylase from Buchnera aphidicola subsp. Cinara cedri (strain Cc).